Here is an 81-residue protein sequence, read N- to C-terminus: MRKGSVKEVLAKIKYDPREKEEDYYVVIEHRGAYGGEKKIPVELIELGHGYFFVGEAQIPYHRILRVVRKDGKVIWETKKL.

It belongs to the UPF0248 family.

The sequence is that of UPF0248 protein TK0315 from Thermococcus kodakarensis (strain ATCC BAA-918 / JCM 12380 / KOD1) (Pyrococcus kodakaraensis (strain KOD1)).